Consider the following 317-residue polypeptide: L-lactate dehydrogenase (317 aa).

Positions 16, 37, and 69 each coordinate NAD(+). Substrate contacts are provided by residues Q86, R92, and 124–127 (NPVD). Residues 122 to 124 (ASN) and S147 each bind NAD(+). A substrate-binding site is contributed by 152–155 (DSAR). H179 functions as the Proton acceptor in the catalytic mechanism. A Phosphotyrosine modification is found at Y223. T232 contacts substrate.

It belongs to the LDH/MDH superfamily. LDH family. As to quaternary structure, homotetramer.

It localises to the cytoplasm. The catalysed reaction is (S)-lactate + NAD(+) = pyruvate + NADH + H(+). It functions in the pathway fermentation; pyruvate fermentation to lactate; (S)-lactate from pyruvate: step 1/1. Its function is as follows. Catalyzes the conversion of lactate to pyruvate. This Mycoplasma capricolum subsp. capricolum (strain California kid / ATCC 27343 / NCTC 10154) protein is L-lactate dehydrogenase.